We begin with the raw amino-acid sequence, 349 residues long: S-adenosylmethionine:tRNA ribosyltransferase-isomerase (349 aa).

The protein belongs to the QueA family. Monomer.

The protein localises to the cytoplasm. It carries out the reaction 7-aminomethyl-7-carbaguanosine(34) in tRNA + S-adenosyl-L-methionine = epoxyqueuosine(34) in tRNA + adenine + L-methionine + 2 H(+). It functions in the pathway tRNA modification; tRNA-queuosine biosynthesis. Transfers and isomerizes the ribose moiety from AdoMet to the 7-aminomethyl group of 7-deazaguanine (preQ1-tRNA) to give epoxyqueuosine (oQ-tRNA). The polypeptide is S-adenosylmethionine:tRNA ribosyltransferase-isomerase (Parabacteroides distasonis (strain ATCC 8503 / DSM 20701 / CIP 104284 / JCM 5825 / NCTC 11152)).